The sequence spans 91 residues: Small ribosomal subunit protein bS18 (91 aa).

This sequence belongs to the bacterial ribosomal protein bS18 family. As to quaternary structure, part of the 30S ribosomal subunit. Forms a tight heterodimer with protein bS6.

Binds as a heterodimer with protein bS6 to the central domain of the 16S rRNA, where it helps stabilize the platform of the 30S subunit. The polypeptide is Small ribosomal subunit protein bS18 (Wolbachia pipientis wMel).